A 331-amino-acid polypeptide reads, in one-letter code: tRNA-cytidine(32) 2-sulfurtransferase (331 aa).

The segment at 1 to 31 is disordered; sequence MNAPHMNDTTADAATLDATAAPAGRPALTRR. Residues 8–23 are compositionally biased toward low complexity; that stretch reads DTTADAATLDATAAPA. The short motif at 71 to 76 is the PP-loop motif element; sequence SGGKDS. The [4Fe-4S] cluster site is built by Cys146, Cys149, and Cys237.

The protein belongs to the TtcA family. Homodimer. Requires Mg(2+) as cofactor. The cofactor is [4Fe-4S] cluster.

The protein localises to the cytoplasm. It carries out the reaction cytidine(32) in tRNA + S-sulfanyl-L-cysteinyl-[cysteine desulfurase] + AH2 + ATP = 2-thiocytidine(32) in tRNA + L-cysteinyl-[cysteine desulfurase] + A + AMP + diphosphate + H(+). The protein operates within tRNA modification. In terms of biological role, catalyzes the ATP-dependent 2-thiolation of cytidine in position 32 of tRNA, to form 2-thiocytidine (s(2)C32). The sulfur atoms are provided by the cysteine/cysteine desulfurase (IscS) system. The protein is tRNA-cytidine(32) 2-sulfurtransferase of Burkholderia lata (strain ATCC 17760 / DSM 23089 / LMG 22485 / NCIMB 9086 / R18194 / 383).